The chain runs to 312 residues: Methionyl-tRNA formyltransferase (312 aa).

109–112 contributes to the (6S)-5,6,7,8-tetrahydrofolate binding site; sequence SLLP.

Belongs to the Fmt family.

It catalyses the reaction L-methionyl-tRNA(fMet) + (6R)-10-formyltetrahydrofolate = N-formyl-L-methionyl-tRNA(fMet) + (6S)-5,6,7,8-tetrahydrofolate + H(+). Its function is as follows. Attaches a formyl group to the free amino group of methionyl-tRNA(fMet). The formyl group appears to play a dual role in the initiator identity of N-formylmethionyl-tRNA by promoting its recognition by IF2 and preventing the misappropriation of this tRNA by the elongation apparatus. The protein is Methionyl-tRNA formyltransferase of Caulobacter sp. (strain K31).